Here is a 443-residue protein sequence, read N- to C-terminus: ATP-dependent protease ATPase subunit HslU (443 aa).

ATP contacts are provided by residues I18 and 60-65 (GVGKTE). A disordered region spans residues 139 to 158 (AKNNWGQNETPAEPSSARQS). The ATP site is built by D256, E321, and R393.

Belongs to the ClpX chaperone family. HslU subfamily. As to quaternary structure, a double ring-shaped homohexamer of HslV is capped on each side by a ring-shaped HslU homohexamer. The assembly of the HslU/HslV complex is dependent on binding of ATP.

The protein localises to the cytoplasm. Its function is as follows. ATPase subunit of a proteasome-like degradation complex; this subunit has chaperone activity. The binding of ATP and its subsequent hydrolysis by HslU are essential for unfolding of protein substrates subsequently hydrolyzed by HslV. HslU recognizes the N-terminal part of its protein substrates and unfolds these before they are guided to HslV for hydrolysis. This Erwinia tasmaniensis (strain DSM 17950 / CFBP 7177 / CIP 109463 / NCPPB 4357 / Et1/99) protein is ATP-dependent protease ATPase subunit HslU.